A 455-amino-acid polypeptide reads, in one-letter code: Zinc finger protein ZPR1 homolog (455 aa).

2 C4-type zinc fingers span residues 28–60 (CPVCEEDGETRIMCTSIPYYRAVILMSFECPHC) and 247–279 (CPNCHGPTEVKMKPTDIPFFQTVIIMSLACDRC).

It belongs to the ZPR1 family.

The protein resides in the nucleus. This Caenorhabditis elegans protein is Zinc finger protein ZPR1 homolog.